A 274-amino-acid polypeptide reads, in one-letter code: MQVRFHKMHGLGNDFVVIDARATAPVEMTAARARALADRKTGVGCDQLILLEPSAVADARMRIFNADGSEVEACGNATRCVVSLLGGSARIETVAGLLEGRSADGQVSVELGEPRFDWDAIPLAYAMDTRAMPVAWEELEAPMAANVGNPHVVFFVPETDAVALDRLGPRIETDPLFPARINVNVATVDDRANIRLRVWERGVGLTDACGTGACATAVSAIRAGLVDSPVRVTLPGGPLTIDWAPGRPIVMTGPATHVFTAETDLSAFGADSRG.

Substrate is bound by residues Asn13, Gln47, and Asn65. The Proton donor role is filled by Cys74. Residues Gly75–Asn76, Asn149, Asn182, and Glu200–Arg201 each bind substrate. Cys209 (proton acceptor) is an active-site residue. Gly210 to Thr211 serves as a coordination point for substrate.

The protein belongs to the diaminopimelate epimerase family. Homodimer.

The protein resides in the cytoplasm. The enzyme catalyses (2S,6S)-2,6-diaminopimelate = meso-2,6-diaminopimelate. It functions in the pathway amino-acid biosynthesis; L-lysine biosynthesis via DAP pathway; DL-2,6-diaminopimelate from LL-2,6-diaminopimelate: step 1/1. Its function is as follows. Catalyzes the stereoinversion of LL-2,6-diaminopimelate (L,L-DAP) to meso-diaminopimelate (meso-DAP), a precursor of L-lysine and an essential component of the bacterial peptidoglycan. The protein is Diaminopimelate epimerase of Rhizorhabdus wittichii (strain DSM 6014 / CCUG 31198 / JCM 15750 / NBRC 105917 / EY 4224 / RW1) (Sphingomonas wittichii).